A 167-amino-acid polypeptide reads, in one-letter code: SsrA-binding protein (167 aa).

Residues 139-167 are disordered; the sequence is QAHDKRHAEKEREWQRDKQRIMRAHNRNA. A compositionally biased stretch (basic and acidic residues) spans 144–158; it reads RHAEKEREWQRDKQR.

This sequence belongs to the SmpB family.

It is found in the cytoplasm. Its function is as follows. Required for rescue of stalled ribosomes mediated by trans-translation. Binds to transfer-messenger RNA (tmRNA), required for stable association of tmRNA with ribosomes. tmRNA and SmpB together mimic tRNA shape, replacing the anticodon stem-loop with SmpB. tmRNA is encoded by the ssrA gene; the 2 termini fold to resemble tRNA(Ala) and it encodes a 'tag peptide', a short internal open reading frame. During trans-translation Ala-aminoacylated tmRNA acts like a tRNA, entering the A-site of stalled ribosomes, displacing the stalled mRNA. The ribosome then switches to translate the ORF on the tmRNA; the nascent peptide is terminated with the 'tag peptide' encoded by the tmRNA and targeted for degradation. The ribosome is freed to recommence translation, which seems to be the essential function of trans-translation. The polypeptide is SsrA-binding protein (Xylella fastidiosa (strain M23)).